We begin with the raw amino-acid sequence, 459 residues long: Glutathione reductase (459 aa).

Residues S14, G15, E34, T41, C42, K50, and A114 each coordinate FAD. Residue S14 coordinates glutathione. Cysteines 42 and 47 form a disulfide. The NADP(+) site is built by I177, E180, R197, K203, and G262. Residues D313 and T321 each contribute to the FAD site. R329 serves as a coordination point for glutathione. A351 is an NADP(+) binding site. H448 serves as a coordination point for FAD. Catalysis depends on H448, which acts as the Proton acceptor.

Belongs to the class-I pyridine nucleotide-disulfide oxidoreductase family. As to quaternary structure, homodimer. Requires FAD as cofactor.

The protein resides in the cytoplasm. It carries out the reaction 2 glutathione + NADP(+) = glutathione disulfide + NADPH + H(+). Catalyzes the reduction of glutathione disulfide (GSSG) to reduced glutathione (GSH). Constitutes the major mechanism to maintain a high GSH:GSSG ratio in the cytosol. The chain is Glutathione reductase (gor) from Nostoc sp. (strain PCC 7120 / SAG 25.82 / UTEX 2576).